A 529-amino-acid chain; its full sequence is UDP-glucuronosyltransferase 2B9 (529 aa).

Positions 1-21 (MSVKWTSVILLIQLSFYFSSG) are cleaved as a signal peptide. N-linked (GlcNAc...) asparagine glycans are attached at residues N67, N68, and N88. The chain crosses the membrane as a helical span at residues 494-514 (IGFLLACVATVIFVIMKCCLF).

Belongs to the UDP-glycosyltransferase family.

Its subcellular location is the microsome membrane. It localises to the endoplasmic reticulum membrane. The enzyme catalyses glucuronate acceptor + UDP-alpha-D-glucuronate = acceptor beta-D-glucuronoside + UDP + H(+). UDPGT is of major importance in the conjugation and subsequent elimination of potentially toxic xenobiotics and endogenous compounds. This isozyme is active on C18, C19, and C21 steroids, bile acids, and several xenobiotics including eugenol, 1-naphthol, and p-nitrophenol. The sequence is that of UDP-glucuronosyltransferase 2B9 (UGT2B9) from Macaca fascicularis (Crab-eating macaque).